The following is a 655-amino-acid chain: Large subunit GTPase 1 homolog (655 aa).

Positions 1 to 31 (MGRRRAPGGGSLGRVLIRHQTQRSRSHRHTD) are disordered. The segment covering 16-28 (LIRHQTQRSRSHR) has biased composition (basic residues). Phosphoserine is present on residues serine 93 and serine 97. Residues 164 to 441 (WRQLWRVIER…LCDCPGLVMP (278 aa)) enclose the CP-type G domain. 212–215 (NKAD) is a GTP binding site. A Phosphoserine modification is found at serine 252. Residues 253–359 (KDEVNSVAGE…ENSQMSNKSH (107 aa)) form a disordered region. Residues 288-327 (EESESDDDDSEYEDCQEDEEEDWQTCSEEDSNPEEGQEEG) are compositionally biased toward acidic residues. Basic and acidic residues predominate over residues 328 to 339 (GCDRDQKEHGPE). Positions 344 to 359 (QSRASPENSQMSNKSH) are enriched in polar residues. Residues 390 to 397 (GYPNVGKS) and 434 to 437 (DCPG) each bind GTP. The interval 625–655 (SAENVPGKPWKKHGNRNKKEKSRRLYRHLDV) is disordered. The span at 633–655 (PWKKHGNRNKKEKSRRLYRHLDV) shows a compositional bias: basic residues.

The protein belongs to the TRAFAC class YlqF/YawG GTPase family. LSG1 subfamily.

Its subcellular location is the cytoplasm. It is found in the endoplasmic reticulum. It localises to the nucleus. The protein resides in the cajal body. It catalyses the reaction GTP + H2O = GDP + phosphate + H(+). Functions as a GTPase. May act by mediating the release of NMD3 from the 60S ribosomal subunit after export into the cytoplasm during the 60S ribosomal subunit maturation. The sequence is that of Large subunit GTPase 1 homolog from Rattus norvegicus (Rat).